A 270-amino-acid polypeptide reads, in one-letter code: Non-structural maintenance of chromosomes element 1 homolog (270 aa).

The segment at 185 to 226 adopts an RING-type; atypical zinc-finger fold; sequence CNVCHKIAIQCQLCENCGIPLHLQCAGIYFRGIANPLCPNCK. Residues 236 to 270 form a disordered region; that stretch reads LSQVSSQGPSHSQAAPVRGRNQRSRNISTVARTSR. Polar residues-rich tracts occupy residues 237–248 and 259–270; these read SQVSSQGPSHSQ and SRNISTVARTSR.

It belongs to the NSE1 family. Component of the SMC5-SMC6 complex.

The protein resides in the nucleus. Its subcellular location is the chromosome. The protein localises to the telomere. It carries out the reaction S-ubiquitinyl-[E2 ubiquitin-conjugating enzyme]-L-cysteine + [acceptor protein]-L-lysine = [E2 ubiquitin-conjugating enzyme]-L-cysteine + N(6)-ubiquitinyl-[acceptor protein]-L-lysine.. Functionally, RING-type zinc finger-containing E3 ubiquitin ligase that assembles with melanoma antigen protein (MAGE) to catalyze the direct transfer of ubiquitin from E2 ubiquitin-conjugating enzyme to a specific substrate. Within MAGE-RING ubiquitin ligase complex, MAGE stimulates and specifies ubiquitin ligase activity likely through recruitment and/or stabilization of the E2 ubiquitin-conjugating enzyme at the E3:substrate complex. Involved in maintenance of genome integrity, DNA damage response and DNA repair. The polypeptide is Non-structural maintenance of chromosomes element 1 homolog (nsmce1) (Xenopus tropicalis (Western clawed frog)).